A 168-amino-acid polypeptide reads, in one-letter code: Large ribosomal subunit protein uL10 (168 aa).

This sequence belongs to the universal ribosomal protein uL10 family. As to quaternary structure, part of the ribosomal stalk of the 50S ribosomal subunit. The N-terminus interacts with L11 and the large rRNA to form the base of the stalk. The C-terminus forms an elongated spine to which L12 dimers bind in a sequential fashion forming a multimeric L10(L12)X complex.

Forms part of the ribosomal stalk, playing a central role in the interaction of the ribosome with GTP-bound translation factors. The sequence is that of Large ribosomal subunit protein uL10 from Lacticaseibacillus casei (strain BL23) (Lactobacillus casei).